A 299-amino-acid chain; its full sequence is tRNA pseudouridine synthase B (299 aa).

Residue Asp-38 is the Nucleophile of the active site.

Belongs to the pseudouridine synthase TruB family. Type 1 subfamily.

The enzyme catalyses uridine(55) in tRNA = pseudouridine(55) in tRNA. Functionally, responsible for synthesis of pseudouridine from uracil-55 in the psi GC loop of transfer RNAs. In Alkaliphilus oremlandii (strain OhILAs) (Clostridium oremlandii (strain OhILAs)), this protein is tRNA pseudouridine synthase B.